The sequence spans 908 residues: Glutamate receptor ionotropic, kainate 2 (908 aa).

A signal peptide spans 1–31 (MKIISPVLSNLVFSRSIKVLLCLLWIGYSQG). Residues 32–561 (TTHVLRFGGI…VFSFLNPLSP (530 aa)) lie on the Extracellular side of the membrane. Asparagine 67, asparagine 73, asparagine 275, asparagine 378, asparagine 412, asparagine 423, and asparagine 430 each carry an N-linked (GlcNAc...) asparagine glycan. An intrachain disulfide couples cysteine 96 to cysteine 347. Residues proline 516, alanine 518, and arginine 523 each contribute to the L-glutamate site. Asparagine 546 is a glycosylation site (N-linked (GlcNAc...) asparagine). The helical transmembrane segment at 562–582 (DIWMYILLAYLGVSCVLFVIA) threads the bilayer. Over 583-638 (RFSPYEWYNPHPCNPDSDVVENNFTLLNSFWFGVGALMQQGSELMPKALSTRIVGG) the chain is Cytoplasmic. Residues 639 to 659 (IWWFFTLIIISSYTANLAAFL) form a helical membrane-spanning segment. Over 660-819 (TVERMESPID…KEASALGVQN (160 aa)) the chain is Extracellular. Positions 689, 690, and 738 each coordinate L-glutamate. The cysteines at positions 750 and 804 are disulfide-linked. N-linked (GlcNAc...) asparagine glycosylation is present at asparagine 751. Residues 820-840 (IGGIFIVLAAGLVLSVFVAVG) form a helical membrane-spanning segment. Topologically, residues 841–908 (EFLYKSKKNA…RRLPGKETMA (68 aa)) are cytoplasmic. 2 positions are modified to phosphoserine; by PKC: serine 846 and serine 868. Residue lysine 886 forms a Glycyl lysine isopeptide (Lys-Gly) (interchain with G-Cter in SUMO1) linkage.

This sequence belongs to the glutamate-gated ion channel (TC 1.A.10.1) family. GRIK2 subfamily. Homotetramer and heterotetramer with GRIK5. Tetramers may be formed by the dimerization of dimers. Assembles into a kainate-gated homomeric channel that does not bind AMPA. Can form functional heteromeric receptors with GRIK4 and GRIK5. Can form functional heteromeric receptors with GRIK3. Interacts with DLG4. Interacts with NETO2. Interacts (via C-terminus) with KLHL17 (via kelch repeats); the interaction targets GRIK2 for degradation via ubiquitin-proteasome pathway. In terms of processing, sumoylation mediates kainate receptor-mediated endocytosis and regulates synaptic transmission. Sumoylation is enhanced by PIAS3 and desumoylated by SENP1. Ubiquitinated. Ubiquitination regulates the GRIK2 levels at the synapse by leading kainate receptor degradation through proteasome. Post-translationally, phosphorylated by PKC at Ser-868 upon agonist activation, this directly enhance sumoylation. In terms of tissue distribution, highest expression is found in the olfactory lobe, piriform cortex, dentate gyrus, hippocampus, granular cell layer of the cerebellum, and in caudate-putamen.

The protein localises to the cell membrane. It localises to the postsynaptic cell membrane. It carries out the reaction Ca(2+)(in) = Ca(2+)(out). The enzyme catalyses Na(+)(in) = Na(+)(out). Its activity is regulated as follows. Cold receptor activity activated by temperatures between 10-19 degrees Celsius. In terms of biological role, ionotropic glutamate receptor that functions as a cation-permeable ligand-gated ion channel, gated by L-glutamate and the glutamatergic agonist kainic acid. L-glutamate acts as an excitatory neurotransmitter at many synapses in the central nervous system. Binding of the excitatory neurotransmitter L-glutamate induces a conformation change, leading to the opening of the cation channel, and thereby converts the chemical signal to an electrical impulse. The receptor then desensitizes rapidly and enters a transient inactive state, characterized by the presence of bound agonist. Modulates cell surface expression of NETO2. In association with GRIK3, involved in presynaptic facilitation of glutamate release at hippocampal mossy fiber synapses. Functionally, independent of its ionotropic glutamate receptor activity, acts as a thermoreceptor conferring sensitivity to cold temperatures. Functions in dorsal root ganglion neurons. This is Glutamate receptor ionotropic, kainate 2 (Grik2) from Rattus norvegicus (Rat).